A 153-amino-acid polypeptide reads, in one-letter code: NAD(P)H-quinone oxidoreductase subunit N (153 aa).

Belongs to the complex I NdhN subunit family. NDH-1 can be composed of about 15 different subunits; different subcomplexes with different compositions have been identified which probably have different functions.

It is found in the cellular thylakoid membrane. It carries out the reaction a plastoquinone + NADH + (n+1) H(+)(in) = a plastoquinol + NAD(+) + n H(+)(out). The catalysed reaction is a plastoquinone + NADPH + (n+1) H(+)(in) = a plastoquinol + NADP(+) + n H(+)(out). Its function is as follows. NDH-1 shuttles electrons from an unknown electron donor, via FMN and iron-sulfur (Fe-S) centers, to quinones in the respiratory and/or the photosynthetic chain. The immediate electron acceptor for the enzyme in this species is believed to be plastoquinone. Couples the redox reaction to proton translocation, and thus conserves the redox energy in a proton gradient. Cyanobacterial NDH-1 also plays a role in inorganic carbon-concentration. The protein is NAD(P)H-quinone oxidoreductase subunit N of Synechococcus sp. (strain CC9311).